The primary structure comprises 1111 residues: Serine/threonine-protein kinase Nek10 (1111 aa).

Positions 1-16 (MPDQDTKAKSTEKTAD) are enriched in basic and acidic residues. 2 disordered regions span residues 1–24 (MPDQ…TTTR) and 47–72 (AINF…HRAR). Polar residues predominate over residues 47-63 (AINFDSAQNNMTKSEPT). The stretch at 481-514 (YKDLVSQLNLLLEDELKQIAENIESINQKKAPLK) forms a coiled coil. Positions 519-791 (YAVLDHLGSG…MISDVMMKYL (273 aa)) constitute a Protein kinase domain. ATP-binding positions include 525–533 (LGSGAFGCV) and Lys548. Residue Asp655 is the Proton acceptor of the active site.

It belongs to the protein kinase superfamily. NEK Ser/Thr protein kinase family. NIMA subfamily. In terms of assembly, interacts with RAF1 and MAP2K1; the interaction is direct with RAF1 and required for ERK1/2-signaling pathway activation in response to UV irradiation. Requires Mg(2+) as cofactor. In terms of tissue distribution, expressed in the mammary gland, lung, spleen, and kidney.

It catalyses the reaction L-seryl-[protein] + ATP = O-phospho-L-seryl-[protein] + ADP + H(+). It carries out the reaction L-threonyl-[protein] + ATP = O-phospho-L-threonyl-[protein] + ADP + H(+). Plays a role in the cellular response to UV irradiation. Mediates G2/M cell cycle arrest, MEK autoactivation and ERK1/2-signaling pathway activation in response to UV irradiation. In ciliated cells, it is involved in the regulation of mucociliary transport. This Mus musculus (Mouse) protein is Serine/threonine-protein kinase Nek10.